The chain runs to 347 residues: Probable replication factor C subunit 3 (347 aa).

Belongs to the activator 1 small subunits family. Heteropentamer of various rfc subunits that forms a complex (RFC) with PCNA in the presence of ATP.

The protein resides in the nucleus. Functionally, the elongation of primed DNA templates by DNA polymerase delta and epsilon requires the action of the accessory proteins PCNA and activator 1. In Dictyostelium discoideum (Social amoeba), this protein is Probable replication factor C subunit 3 (rfc3).